Reading from the N-terminus, the 303-residue chain is Glycine--tRNA ligase alpha subunit (303 aa).

This sequence belongs to the class-II aminoacyl-tRNA synthetase family. In terms of assembly, tetramer of two alpha and two beta subunits.

It is found in the cytoplasm. The catalysed reaction is tRNA(Gly) + glycine + ATP = glycyl-tRNA(Gly) + AMP + diphosphate. The protein is Glycine--tRNA ligase alpha subunit (glyQ) of Helicobacter pylori (strain ATCC 700392 / 26695) (Campylobacter pylori).